Here is a 179-residue protein sequence, read N- to C-terminus: Peptidyl-tRNA hydrolase (179 aa).

A tRNA-binding site is contributed by tyrosine 14. Residue histidine 19 is the Proton acceptor of the active site. Positions 61, 63, and 107 each coordinate tRNA.

Belongs to the PTH family. As to quaternary structure, monomer.

Its subcellular location is the cytoplasm. The enzyme catalyses an N-acyl-L-alpha-aminoacyl-tRNA + H2O = an N-acyl-L-amino acid + a tRNA + H(+). In terms of biological role, hydrolyzes ribosome-free peptidyl-tRNAs (with 1 or more amino acids incorporated), which drop off the ribosome during protein synthesis, or as a result of ribosome stalling. Its function is as follows. Catalyzes the release of premature peptidyl moieties from peptidyl-tRNA molecules trapped in stalled 50S ribosomal subunits, and thus maintains levels of free tRNAs and 50S ribosomes. In Campylobacter lari (strain RM2100 / D67 / ATCC BAA-1060), this protein is Peptidyl-tRNA hydrolase.